A 206-amino-acid chain; its full sequence is MARYLGPKLKLSRREGTDLFLKSGVRAIDSKCKIDTAPGQHGARKPRLSDYGSQLREKQKVRRIYGILERQFRNYYKEANRLKGNTGENLLVLLEGRLDNVVYRMGFAATRAEARQLVSHKAIVVNGRVVNIPSFQVSVDDVVAIREKSKKQARIKASLELAEQKEKPTWLEVDSAKMEGVFKRVPERSDLSADINEHLIVELYSK.

The region spanning 96–156 is the S4 RNA-binding domain; sequence GRLDNVVYRM…EKSKKQARIK (61 aa).

Belongs to the universal ribosomal protein uS4 family. Part of the 30S ribosomal subunit. Contacts protein S5. The interaction surface between S4 and S5 is involved in control of translational fidelity.

Functionally, one of the primary rRNA binding proteins, it binds directly to 16S rRNA where it nucleates assembly of the body of the 30S subunit. With S5 and S12 plays an important role in translational accuracy. In Actinobacillus succinogenes (strain ATCC 55618 / DSM 22257 / CCUG 43843 / 130Z), this protein is Small ribosomal subunit protein uS4.